The sequence spans 338 residues: Protein FosB (338 aa).

Disordered regions lie at residues 1-54 and 80-179; these read MFQA…PGSF and AQSQ…RREL. A compositionally biased stretch (polar residues) spans 13 to 31; it reads SRCSSSPSAESQYLSSVDS. A Phosphoserine modification is found at Ser-27. Residues 123 to 137 show a composition bias toward low complexity; that stretch reads PSTSTSTSGPVSARP. Positions 155–218 constitute a bZIP domain; sequence EEKRRVRRER…ERLEFVLVAH (64 aa). The segment at 157–182 is basic motif; the sequence is KRRVRRERNKLAAAKCRNRRRELTDR. The interval 183-211 is leucine-zipper; that stretch reads LQAETDQLEEEKAELESEIAELQKEKERL. Disordered stretches follow at residues 222–276 and 315–338; these read CKIP…PPNL and AGSQRTSGSEQPSDPLNSPSLLAL. Positions 256–265 are enriched in pro residues; it reads LPPPPPPPLP. A compositionally biased stretch (polar residues) spans 266–276; sequence FQSSRDAPPNL.

The protein belongs to the bZIP family. Fos subfamily. Heterodimer; binds to DNA as heterodimer. Component of an AP-1 transcription factor complex; composed of FOS-JUN heterodimers. As part of the AP-1 transcription factor complex, forms heterodimers with JUN, JUNB or JUND, thereby binding to the AP-1 consensus sequence and stimulating transcription. Phosphorylated; phosphorylation is induced by chronic electroconvulsive seizure (ECS) treatment. As to expression, expressed in brain. Expressed in pyramidal cells in CA1 and CA3, in the dentate gyrus and the nucleus accumbens (at protein level).

The protein localises to the nucleus. Functionally, heterodimerizes with proteins of the JUN family to form an AP-1 transcription factor complex, thereby enhancing their DNA binding activity to an AP-1 consensus sequence 5'-TGA[GC]TCA-3' and enhancing their transcriptional activity. Exhibits transactivation activity in vitro. As part of the AP-1 complex, facilitates enhancer selection together with cell-type-specific transcription factors by collaboratively binding to nucleosomal enhancers and recruiting the SWI/SNF (BAF) chromatin remodeling complex to establish accessible chromatin. Together with JUN, plays a role in activation-induced cell death of T cells by binding to the AP-1 promoter site of FASLG/CD95L, and inducing its transcription in response to activation of the TCR/CD3 signaling pathway. Involved in the display of nurturing behavior towards newborns. May play a role in neurogenesis in the hippocampus and in learning and memory-related tasks by regulating the expression of various genes involved in neurogenesis, depression and epilepsy. Implicated in behavioral responses related to morphine reward and spatial memory. In Rattus norvegicus (Rat), this protein is Protein FosB.